The sequence spans 341 residues: L-threonine 3-dehydrogenase (341 aa).

Cys38 serves as a coordination point for Zn(2+). Catalysis depends on charge relay system residues Thr40 and His43. Residues His63, Glu64, Cys93, Cys96, Cys99, and Cys107 each coordinate Zn(2+). Residues Ile175, Asp195, Arg200, 262–264 (LGI), and 286–287 (IY) contribute to the NAD(+) site.

Belongs to the zinc-containing alcohol dehydrogenase family. As to quaternary structure, homotetramer. It depends on Zn(2+) as a cofactor.

It localises to the cytoplasm. It catalyses the reaction L-threonine + NAD(+) = (2S)-2-amino-3-oxobutanoate + NADH + H(+). It participates in amino-acid degradation; L-threonine degradation via oxydo-reductase pathway; glycine from L-threonine: step 1/2. Its function is as follows. Catalyzes the NAD(+)-dependent oxidation of L-threonine to 2-amino-3-ketobutyrate. The polypeptide is L-threonine 3-dehydrogenase (Shewanella halifaxensis (strain HAW-EB4)).